Reading from the N-terminus, the 479-residue chain is Serine carboxypeptidase-like 44 (479 aa).

A signal peptide spans 1-22 (MVGGKWRFLEVAVVVMVLQWSC). Disulfide bonds link C92-C352, C253-C270, and C295-C320. The N-linked (GlcNAc...) asparagine glycan is linked to N143. S184 is a catalytic residue. N-linked (GlcNAc...) asparagine glycosylation is present at N265. N341 carries an N-linked (GlcNAc...) asparagine glycan. D389 is a catalytic residue. Residue N411 is glycosylated (N-linked (GlcNAc...) asparagine). The active site involves H446.

Belongs to the peptidase S10 family. In terms of tissue distribution, expressed in seedlings.

Its subcellular location is the secreted. Its function is as follows. Probable carboxypeptidase. The polypeptide is Serine carboxypeptidase-like 44 (SCPL44) (Arabidopsis thaliana (Mouse-ear cress)).